Here is an 805-residue protein sequence, read N- to C-terminus: Ubiquitin carboxyl-terminal hydrolase 10 (805 aa).

The segment at aspartate 139–tyrosine 170 is disordered. Over residues asparagine 143–glycine 153 the composition is skewed to polar residues. The USP domain occupies arginine 422 to valine 802. Cysteine 431 serves as the catalytic Nucleophile. A disordered region spans residues histidine 561–arginine 593. The span at valine 569–glutamine 580 shows a compositional bias: basic and acidic residues. Catalysis depends on histidine 756, which acts as the Proton acceptor.

It belongs to the peptidase C19 family. USP10 subfamily.

The protein resides in the cytoplasm. The protein localises to the nucleus. It carries out the reaction Thiol-dependent hydrolysis of ester, thioester, amide, peptide and isopeptide bonds formed by the C-terminal Gly of ubiquitin (a 76-residue protein attached to proteins as an intracellular targeting signal).. In terms of biological role, hydrolase that can remove conjugated ubiquitin from target proteins such as p53/tp53, rps2/us5, rps3/us3, rps10/eS10, becn1, snx3 and cftr. Acts as an essential regulator of p53/tp53 stability: in unstressed cells, specifically deubiquitinates p53/tp53 in the cytoplasm, leading to counteracts MDM2 action and stabilize p53/tp53. Following DNA damage, translocates to the nucleus and deubiquitinates p53/tp53, leading to regulate the p53/TP53-dependent DNA damage response. Component of a regulatory loop that controls autophagy and p53/tp53 levels. Plays a key role in 40S ribosome subunit recycling when a ribosome has stalled during translation: acts both by inhibiting formation of stress granules, which store stalled translation pre-initiation complexes, and mediating deubiquitination of 40S ribosome subunits. Deubiquitinates cftr in early endosomes, enhancing its endocytic recycling. The protein is Ubiquitin carboxyl-terminal hydrolase 10 (usp10) of Xenopus tropicalis (Western clawed frog).